The primary structure comprises 3678 residues: Dystrophin (3678 aa).

Positions 1–240 are actin-binding; it reads MLWWEEVEDC…YITSLFQVLP (240 aa). Calponin-homology (CH) domains are found at residues 15–119 and 134–240; these read DVQK…LHWQ and TNSE…QVLP. Positions 63–72 are ANK2- and ANK-3 binding; it reads PKEKGSTRVH. The segment at 313–333 is disordered; sequence DSTQSPYPSQHLEAPRDKSLD. Spectrin repeat units lie at residues 341–449, 450–558, 561–669, 721–830, 832–936, 945–1047, 1050–1156, 1159–1265, 1268–1369, 1370–1465, 1470–1570, 1573–1678, 1681–1780, 1781–1876, 1879–1981, 1994–2103, 2106–2210, 2213–2318, 2319–2416, 2468–2570, 2573–2679, 2682–2795, 2801–2923, and 2928–3033; these read VNLD…KLHK, VLMD…VLQD, LKWQ…QISQ, ELRK…WLEY, TNII…ELQT, RYQE…KLEE, NKLR…ALKA, DKTV…TLEE, ACWH…LLEQ, SIQS…LFQK, EQRL…QLEK, KLSR…LLLE, KHME…KASI, PLKE…KALE, HQWY…TLHE, DVSY…RFDR, EKWR…RIEE, NVLS…ELEV, HLKD…LRTK, FNRA…QLNE, KDST…ALEE, RLLQ…HLEA, KRLH…RKID, and RLQE…QLHE. The tract at residues 1417-1915 is interaction with SYNM; it reads SDLTSHEISL…PEPRDERKLK (499 aa). The WW domain occupies 3048 to 3081; that stretch reads TSVQGPWERAISPNKVPYYINHETQTTCWDHPKM. The tract at residues 3051-3401 is interaction with SYNM; that stretch reads QGPWERAISP…TVLEGDNMET (351 aa). Residues 3301-3357 form a ZZ-type; degenerate zinc finger; that stretch reads KHQAKCNICKECPIIGFRYRSLKHFNYDICQSCFFSGRVAKGHKMHYPMVEYCTPTT. Zn(2+)-binding residues include C3306, C3309, C3330, and C3333. The interval 3459 to 3511 is binds to SNTB1; sequence DDEHLLIQHYCQSLNQDSPLSQPRSPAQILISLESEERGELERILADLEEENR. A phosphoserine mark is found at S3476, S3483, and S3493. Disordered stretches follow at residues 3521–3547 and 3596–3678; these read KQQHEHKGLSPLPSPPEMMPTSPQSPR and EAKV…EDTM. Polar residues-rich tracts occupy residues 3600–3619 and 3655–3665; these read NGTTVSSPSTSLQRSDSSQP and QLNNSFPSSRG. Residues S3605, S3606, S3610, S3616, S3617, and S3659 each carry the phosphoserine modification.

Interacts with SYNM. Interacts with the syntrophins SNTG1 and SNTG2. Interacts with KRT19. Component of the dystrophin-associated glycoprotein complex which is composed of three subcomplexes: a cytoplasmic complex comprised of DMD (or UTRN), DTNA and a number of syntrophins, such as SNTB1, SNTB2, SNTG1 and SNTG2, the transmembrane dystroglycan complex, and the sarcoglycan-sarcospan complex. Interacts with DAG1 (betaDAG1) with DMD; the interaction is inhibited by phosphorylation on the PPXY motif of DAG1. Interacts with SYNM; SNTA1 and SNTB1. Interacts with CMYA5. Directly interacts with ANK2 and ANK3; these interactions do not interfere with betaDAG1-binding and are necessary for proper localization in muscle cells. Identified in a dystroglycan complex that contains at least PRX, DRP2, UTRN, DMD and DAG1. Interacts with DTNB. Interacts with PGM5; the interaction is direct. Interacts with NOS1; localizes NOS1 to sarcolemma in muscle cells. Detected in quadriceps muscle and in sciatic nerve (at protein level). Expressed in the sarcolemma of the soleus muscle (at protein level). Differentially expressed during skeletal muscle, heart, and brain development. Also expressed in retina.

The protein localises to the cell membrane. The protein resides in the sarcolemma. It localises to the cytoplasm. It is found in the cytoskeleton. Its subcellular location is the postsynaptic cell membrane. Functionally, anchors the extracellular matrix to the cytoskeleton via F-actin. Ligand for dystroglycan. Component of the dystrophin-associated glycoprotein complex which accumulates at the neuromuscular junction (NMJ) and at a variety of synapses in the peripheral and central nervous systems and has a structural function in stabilizing the sarcolemma. Also implicated in signaling events and synaptic transmission. This Mus musculus (Mouse) protein is Dystrophin (Dmd).